Reading from the N-terminus, the 358-residue chain is Peptide chain release factor 1 (358 aa).

At Gln-235 the chain carries N5-methylglutamine.

This sequence belongs to the prokaryotic/mitochondrial release factor family. In terms of processing, methylated by PrmC. Methylation increases the termination efficiency of RF1.

It localises to the cytoplasm. In terms of biological role, peptide chain release factor 1 directs the termination of translation in response to the peptide chain termination codons UAG and UAA. This chain is Peptide chain release factor 1, found in Brachyspira hyodysenteriae (strain ATCC 49526 / WA1).